The primary structure comprises 206 residues: LexA repressor (206 aa).

The segment at residues 28 to 48 is a DNA-binding region (H-T-H motif); sequence RAEIATRLGFKSANAAEEHLK. Active-site for autocatalytic cleavage activity residues include Ser123 and Lys160.

This sequence belongs to the peptidase S24 family. Homodimer.

The catalysed reaction is Hydrolysis of Ala-|-Gly bond in repressor LexA.. Represses a number of genes involved in the response to DNA damage (SOS response), including recA and lexA. In the presence of single-stranded DNA, RecA interacts with LexA causing an autocatalytic cleavage which disrupts the DNA-binding part of LexA, leading to derepression of the SOS regulon and eventually DNA repair. This chain is LexA repressor, found in Shewanella oneidensis (strain ATCC 700550 / JCM 31522 / CIP 106686 / LMG 19005 / NCIMB 14063 / MR-1).